The primary structure comprises 488 residues: Spermatogenesis-associated protein 6 (488 aa).

An N-terminal signal peptide occupies residues 1 to 17; that stretch reads MPKVKALQCALALEIRS. The disordered stretch occupies residues 176-225; that stretch reads HGRLQCRTSRSQKKKSKSPERSKYCINTKNYEQPTISSKSHSPSPYTKRR. Over residues 200 to 220 the composition is skewed to polar residues; the sequence is CINTKNYEQPTISSKSHSPSP. A phosphoserine mark is found at serine 217 and serine 219. Residue lysine 248 forms a Glycyl lysine isopeptide (Lys-Gly) (interchain with G-Cter in SUMO2) linkage. Serine 265, serine 274, serine 325, serine 343, serine 346, serine 354, serine 424, serine 465, and serine 487 each carry phosphoserine.

Belongs to the SPATA6 family. In terms of assembly, interacts with MYL6. In terms of tissue distribution, specifically expressed in developing spermatids and mature spermatozoa (at protein level). Isoform 1 is weakly expressed in testis, ovary, thymus and placenta. Isoform 2 and isoform 3 are testis-specific. Expression isw higher in spermatids than in spermatocytes and spermatogonia.

Its subcellular location is the secreted. The protein localises to the cell projection. It is found in the cilium. The protein resides in the flagellum. Functionally, required for formation of the sperm connecting piece during spermiogenesis. Sperm connecting piece is essential for linking the developing flagellum to the head during late spermiogenesis. May be involved in myosin-based microfilament transport through interaction with myosin subunits. This is Spermatogenesis-associated protein 6 from Mus musculus (Mouse).